The primary structure comprises 941 residues: Isoleucine--tRNA ligase (941 aa).

A 'HIGH' region motif is present at residues 58–68 (PYANGDIHIGH). Glu-563 contributes to the L-isoleucyl-5'-AMP binding site. The short motif at 604-608 (KMSKS) is the 'KMSKS' region element. Lys-607 contacts ATP. Zn(2+) contacts are provided by Cys-904, Cys-907, Cys-924, and Cys-927.

Belongs to the class-I aminoacyl-tRNA synthetase family. IleS type 1 subfamily. As to quaternary structure, monomer. Zn(2+) is required as a cofactor.

It localises to the cytoplasm. The enzyme catalyses tRNA(Ile) + L-isoleucine + ATP = L-isoleucyl-tRNA(Ile) + AMP + diphosphate. Catalyzes the attachment of isoleucine to tRNA(Ile). As IleRS can inadvertently accommodate and process structurally similar amino acids such as valine, to avoid such errors it has two additional distinct tRNA(Ile)-dependent editing activities. One activity is designated as 'pretransfer' editing and involves the hydrolysis of activated Val-AMP. The other activity is designated 'posttransfer' editing and involves deacylation of mischarged Val-tRNA(Ile). The polypeptide is Isoleucine--tRNA ligase (Halorhodospira halophila (strain DSM 244 / SL1) (Ectothiorhodospira halophila (strain DSM 244 / SL1))).